A 541-amino-acid chain; its full sequence is Chaperonin GroEL 2 (541 aa).

Residues 30–33, Lys51, 87–91, Gly415, and Asp496 each bind ATP; these read TLGP and DGTTT.

The protein belongs to the chaperonin (HSP60) family. As to quaternary structure, forms a cylinder of 14 subunits composed of two heptameric rings stacked back-to-back. Interacts with the co-chaperonin GroES.

The protein localises to the cytoplasm. It carries out the reaction ATP + H2O + a folded polypeptide = ADP + phosphate + an unfolded polypeptide.. Functionally, together with its co-chaperonin GroES, plays an essential role in assisting protein folding. The GroEL-GroES system forms a nano-cage that allows encapsulation of the non-native substrate proteins and provides a physical environment optimized to promote and accelerate protein folding. The protein is Chaperonin GroEL 2 of Bradyrhizobium sp. (strain BTAi1 / ATCC BAA-1182).